The primary structure comprises 257 residues: Histidine/lysine/arginine/ornithine transport ATP-binding protein HisP (257 aa).

An ABC transporter domain is found at 6-252 (LNVIDLHKRY…PQSPRLQRFL (247 aa)). Residues serine 40, glycine 41, glycine 43, lysine 44, serine 45, and threonine 46 each contribute to the ATP site.

It belongs to the ABC transporter superfamily. The HisPMQJ complex is composed of two ATP-binding proteins (HisP), two transmembrane proteins (HisM and HisQ) and a solute-binding protein (HisJ). The HisPMQ-ArgT complex is composed of two ATP-binding proteins (HisP), two transmembrane proteins (HisM and HisQ) and a solute-binding protein (ArgT).

It localises to the cell inner membrane. It carries out the reaction a polar amino acid(out) + ATP + H2O = a polar amino acid(in) + ADP + phosphate + H(+). The enzyme catalyses L-histidine(out) + ATP + H2O = L-histidine(in) + ADP + phosphate + H(+). It catalyses the reaction L-lysine(out) + ATP + H2O = L-lysine(in) + ADP + phosphate + H(+). The catalysed reaction is L-arginine(out) + ATP + H2O = L-arginine(in) + ADP + phosphate + H(+). It carries out the reaction L-ornithine(out) + ATP + H2O = L-ornithine(in) + ADP + phosphate + H(+). In terms of biological role, part of the ABC transporter complex HisPMQJ involved in histidine transport. Is also part of the ABC transporter complex HisPMQ-ArgT involved in lysine/arginine/ornithine transport. Shows ATPase activity. Responsible for energy coupling to the transport system. This Escherichia coli (strain K12) protein is Histidine/lysine/arginine/ornithine transport ATP-binding protein HisP.